A 146-amino-acid polypeptide reads, in one-letter code: UPF0178 protein BCG9842_B2187 (146 aa).

Belongs to the UPF0178 family.

This Bacillus cereus (strain G9842) protein is UPF0178 protein BCG9842_B2187.